The sequence spans 434 residues: Indole diterpene prenyltransferase nodD2 (434 aa).

L-tryptophan-binding positions include Leu85–Ile86 and Glu94. Residues Arg107, Lys194, Arg268, Lys270, Tyr272, Gln351, Tyr353, Tyr418, and Tyr422 each coordinate substrate.

This sequence belongs to the tryptophan dimethylallyltransferase family.

Its pathway is secondary metabolite biosynthesis. Its function is as follows. Indole diterpene prenyltransferase; part of the gene cluster that mediates the biosynthesis of the indole diterpenes nodulisporic acids (NA). Nodulisporic acid A (NAA) and its chemically modified derivatives are of particular significance because of their highly potent insecticidal activity against blood-feeding arthropods and lack of observable adverse effects on mammals, in particular the tremogenicity associated with the paspaline-derived IDTs is not observed. The geranylgeranyl diphosphate (GGPP) synthase ggs1, localized outside of the cluster, is proposed to catalyze the first step in nodulisporic acid biosynthesis via conversion of farnesyl pyrophosphate and isopentyl pyrophosphate into geranylgeranyl pyrophosphate (GGPP). Condensation of indole-3-glycerol phosphate with GGPP by the prenyl transferase nodC then forms 3-geranylgeranylindole (3-GGI). Epoxidation by the FAD-dependent monooxygenase nodM leads to a single-epoxidized-GGI that is substrate of the terpene cyclase nodB for cyclization to yield emindole SB. The terminal methyl carbon, C28, of emindole SB is then oxidized by the cytochrome P450 monooxygenase nodW to produce nodulisporic acid F (NAF), the pentacyclic core of NAA. NAF is converted to nodulisporic acid E (NAE) via prenylation. This step is probably performed by one of the indole diterpene prenyltransferases nodD1 or nodD2. Several oxidation steps performed by the FAD-linked oxidoreductase nodO and one of the cytochrome P450 monooxygenase nodR, nodX or nodZ further convert NAE to nodulisporic acid D (NAD). NAD is substrate of cytochrome P450 monooxygenase nodJ to produce the precursor of nodulisporic acid C (NAC), converted to NAC by one of the indole diterpene prenyltransferases nodD1 or nodD2. The FAD-dependent monooxygenase nodY2 then oxidizes NAC to nodulisporic acid B (NAB). Finally NAB is converted to NAA by one of the cytochrome P450 monooxygenases nodR, nodX or nodZ. The sequence is that of Indole diterpene prenyltransferase nodD2 from Hypoxylon pulicicidum.